Reading from the N-terminus, the 272-residue chain is NH(3)-dependent NAD(+) synthetase (272 aa).

45 to 52 (GISGGQDS) lines the ATP pocket. Aspartate 51 serves as a coordination point for Mg(2+). Arginine 138 contributes to the deamido-NAD(+) binding site. Threonine 158 serves as a coordination point for ATP. Glutamate 163 lines the Mg(2+) pocket. Residues lysine 171 and aspartate 178 each coordinate deamido-NAD(+). 2 residues coordinate ATP: lysine 187 and threonine 209. Residue 258-259 (HK) coordinates deamido-NAD(+).

This sequence belongs to the NAD synthetase family. As to quaternary structure, homodimer.

It carries out the reaction deamido-NAD(+) + NH4(+) + ATP = AMP + diphosphate + NAD(+) + H(+). Its pathway is cofactor biosynthesis; NAD(+) biosynthesis; NAD(+) from deamido-NAD(+) (ammonia route): step 1/1. In terms of biological role, catalyzes the ATP-dependent amidation of deamido-NAD to form NAD. Uses ammonia as a nitrogen source. The polypeptide is NH(3)-dependent NAD(+) synthetase (Bacillus cereus (strain G9842)).